Reading from the N-terminus, the 950-residue chain is 2-oxoglutarate dehydrogenase E1 component (950 aa).

It belongs to the alpha-ketoglutarate dehydrogenase family. As to quaternary structure, homodimer. Part of the 2-oxoglutarate dehydrogenase (OGDH) complex composed of E1 (2-oxoglutarate dehydrogenase), E2 (dihydrolipoamide succinyltransferase) and E3 (dihydrolipoamide dehydrogenase); the complex contains multiple copies of the three enzymatic components (E1, E2 and E3). Requires thiamine diphosphate as cofactor.

The catalysed reaction is N(6)-[(R)-lipoyl]-L-lysyl-[protein] + 2-oxoglutarate + H(+) = N(6)-[(R)-S(8)-succinyldihydrolipoyl]-L-lysyl-[protein] + CO2. In terms of biological role, E1 component of the 2-oxoglutarate dehydrogenase (OGDH) complex which catalyzes the decarboxylation of 2-oxoglutarate, the first step in the conversion of 2-oxoglutarate to succinyl-CoA and CO(2). The polypeptide is 2-oxoglutarate dehydrogenase E1 component (odhA) (Cupriavidus necator (strain ATCC 17699 / DSM 428 / KCTC 22496 / NCIMB 10442 / H16 / Stanier 337) (Ralstonia eutropha)).